The sequence spans 218 residues: UPF0711 protein C18orf21 homolog (218 aa).

Position 126 is a phosphoserine (S126). The segment covering A130–A146 has biased composition (low complexity). The segment at A130–S192 is disordered. Phosphothreonine is present on T140. Positions G147–H156 are enriched in polar residues. Low complexity predominate over residues R161 to S172. Residues G173 to N183 are compositionally biased toward polar residues.

Belongs to the UPF0711 family.

This Rattus norvegicus (Rat) protein is UPF0711 protein C18orf21 homolog.